The sequence spans 233 residues: Large ribosomal subunit protein uL1 (233 aa).

The protein belongs to the universal ribosomal protein uL1 family. Part of the 50S ribosomal subunit.

Its function is as follows. Binds directly to 23S rRNA. The L1 stalk is quite mobile in the ribosome, and is involved in E site tRNA release. Protein L1 is also a translational repressor protein, it controls the translation of the L11 operon by binding to its mRNA. The protein is Large ribosomal subunit protein uL1 of Vibrio campbellii (strain ATCC BAA-1116).